The following is an 86-amino-acid chain: Large ribosomal subunit protein bL27 (86 aa).

It belongs to the bacterial ribosomal protein bL27 family.

The chain is Large ribosomal subunit protein bL27 from Cupriavidus metallidurans (strain ATCC 43123 / DSM 2839 / NBRC 102507 / CH34) (Ralstonia metallidurans).